We begin with the raw amino-acid sequence, 213 residues long: RxLR effector protein PexRD1 (213 aa).

The N-terminal stretch at 1-19 is a signal peptide; sequence MRACNTLLPTAIVLTSCDA. Residues 50–77 carry the RxLR-dEER motif; the sequence is RQLRGFYATENTDPVNNQDTAHEDGEER.

Belongs to the RxLR effector family.

The protein resides in the secreted. It localises to the host nucleus. Its function is as follows. Effector that enhances P.infestans colonization of Nicotiana benthamiana leaves. This Phytophthora infestans (strain T30-4) (Potato late blight agent) protein is RxLR effector protein PexRD1.